Reading from the N-terminus, the 495-residue chain is Two-component response regulator-like APRR3 (495 aa).

The Response regulatory domain occupies 65-183 (KVLLVENDDS…ELKNLWQHVW (119 aa)). 2 disordered regions span residues 188 to 441 (SSSG…RWAQ) and 465 to 495 (HSRKKLAEQRPHVKGQFIRKRDDHKSGSEDN). The span at 206-217 (PESTQGSENDAS) shows a compositional bias: polar residues. Residues 231-248 (GLSNQDGGSDNGSGTQSS) show a composition bias toward low complexity. Polar residues predominate over residues 256–265 (TKSTSPSNQF). The span at 284–293 (RLKEAEDQKE) shows a compositional bias: basic and acidic residues. Residues 294 to 304 (QIGTGSQTGMS) are compositionally biased toward polar residues. A compositionally biased stretch (basic and acidic residues) spans 307–319 (KKAEEPGDLEKNA). Positions 335–350 (NRSSGNSQVESKAPSS) are enriched in polar residues. Residues 349–372 (SSNREDLQSLEQTLKKTREDRDYK) adopt a coiled-coil conformation. Residues 351–378 (NREDLQSLEQTLKKTREDRDYKVGDRSV) show a composition bias toward basic and acidic residues. Composition is skewed to polar residues over residues 380–395 (RHSNLSAFSKYNNGAT) and 420–436 (GSSSSSDNPLKQQSSGS). One can recognise a CCT domain in the interval 442–484 (REAALMKFRLKRKERCFEKKVRYHSRKKLAEQRPHVKGQFIRK). The segment covering 483 to 495 (RKRDDHKSGSEDN) has biased composition (basic and acidic residues).

This sequence belongs to the ARR-like family. Interacts with APRR1/TOC1 (via N-terminus). In terms of processing, phosphorylated by WNK1; during the night. Phosphorylation is required for optimal interaction with APRR1/TOC1.

It is found in the nucleus. Controls photoperiodic flowering response. Component of the circadian clock. Controls the degradation of APRR1/TOC1 by the SCF(ZTL) complex. Expression of several members of the ARR-like family is controlled by circadian rhythm. The particular coordinated sequential expression of APRR9, APRR7, APRR5, APRR3 and APPR1 result to circadian waves that may be at the basis of the endogenous circadian clock. The protein is Two-component response regulator-like APRR3 (APRR3) of Arabidopsis thaliana (Mouse-ear cress).